Reading from the N-terminus, the 71-residue chain is DNA-directed RNA polymerase subunit 10-like protein (71 aa).

Residues Cys7, Cys10, Cys44, and Cys45 each coordinate Zn(2+).

Belongs to the archaeal Rpo10/eukaryotic RPB10 RNA polymerase subunit family. Interacts with IYO.

The protein localises to the nucleus. This Arabidopsis thaliana (Mouse-ear cress) protein is DNA-directed RNA polymerase subunit 10-like protein.